The primary structure comprises 436 residues: MGKPVVAIVGRPNVGKSTIFNRIAGERISIVEDTPGVTRDRIYSSAEWLNHDFNLIDTGGIEVGDEPFLAQIRHQAEIAMEEADVIIFMTNGREGVTAADEEVAKILYRTKKPVVLAVNKVDNPEMRANIYDFYALGFGEPFPISGTHGLGLGDLLDAVSEHFKNIPETKYEDEVVQFCLIGRPNVGKSSLVNAMIGEERVIVSNIAGTTRDAIDTRFTYNQRDFVIVDTAGMRKKGKVYEATEKYSVLRALKAIDRSEVVCVVLDGEEGIIEQDKRIAGYAHEAGKAVVIVVNKWDAVEKDERTMKEFEEKVRDHFQFLDYAPVLFMSALTKKRIHTLMPAVMTASENHSMRVQTNILNDIIMDAVAMNPTPTHNGNRLKIYYATQVAVKPPTFVVFVNDPELMHFSYERFLENRIRDAFGFEGTPIRIFARARK.

2 EngA-type G domains span residues 4–167 and 176–351; these read PVVA…KNIP and VQFC…ENHS. Residues 10–17, 57–61, 119–122, 182–189, 229–233, and 294–297 contribute to the GTP site; these read GRPNVGKS, DTGGI, NKVD, DTAGM, and NKWD. A KH-like domain is found at 352 to 436; it reads MRVQTNILND…PIRIFARARK (85 aa).

It belongs to the TRAFAC class TrmE-Era-EngA-EngB-Septin-like GTPase superfamily. EngA (Der) GTPase family. As to quaternary structure, associates with the 50S ribosomal subunit.

GTPase that plays an essential role in the late steps of ribosome biogenesis. This Bacillus licheniformis (strain ATCC 14580 / DSM 13 / JCM 2505 / CCUG 7422 / NBRC 12200 / NCIMB 9375 / NCTC 10341 / NRRL NRS-1264 / Gibson 46) protein is GTPase Der.